The sequence spans 556 residues: Dihydroxy-acid dehydratase (556 aa).

Aspartate 78 contacts Mg(2+). Cysteine 119 serves as a coordination point for [2Fe-2S] cluster. Mg(2+)-binding residues include aspartate 120 and lysine 121. Lysine 121 carries the post-translational modification N6-carboxylysine. Cysteine 195 serves as a coordination point for [2Fe-2S] cluster. Glutamate 446 provides a ligand contact to Mg(2+). Serine 472 serves as the catalytic Proton acceptor.

Belongs to the IlvD/Edd family. In terms of assembly, homodimer. [2Fe-2S] cluster serves as cofactor. It depends on Mg(2+) as a cofactor.

The catalysed reaction is (2R)-2,3-dihydroxy-3-methylbutanoate = 3-methyl-2-oxobutanoate + H2O. It catalyses the reaction (2R,3R)-2,3-dihydroxy-3-methylpentanoate = (S)-3-methyl-2-oxopentanoate + H2O. Its pathway is amino-acid biosynthesis; L-isoleucine biosynthesis; L-isoleucine from 2-oxobutanoate: step 3/4. It participates in amino-acid biosynthesis; L-valine biosynthesis; L-valine from pyruvate: step 3/4. Its function is as follows. Functions in the biosynthesis of branched-chain amino acids. Catalyzes the dehydration of (2R,3R)-2,3-dihydroxy-3-methylpentanoate (2,3-dihydroxy-3-methylvalerate) into 2-oxo-3-methylpentanoate (2-oxo-3-methylvalerate) and of (2R)-2,3-dihydroxy-3-methylbutanoate (2,3-dihydroxyisovalerate) into 2-oxo-3-methylbutanoate (2-oxoisovalerate), the penultimate precursor to L-isoleucine and L-valine, respectively. The sequence is that of Dihydroxy-acid dehydratase from Desulfatibacillum aliphaticivorans.